A 306-amino-acid polypeptide reads, in one-letter code: Uricase (306 aa).

Residues Lys-5 and Thr-65 each act as charge relay system in the active site. Urate is bound by residues Thr-65, Asp-66, Phe-175, Arg-192, Ile-240, Gln-241, and Asn-267. The tract at residues 281–306 (AKVLREPPRPTGYQQFSMDRSDLEEQ) is disordered.

It belongs to the uricase family.

The enzyme catalyses urate + O2 + H2O = 5-hydroxyisourate + H2O2. Its pathway is purine metabolism; urate degradation; (S)-allantoin from urate: step 1/3. Functionally, catalyzes the oxidation of uric acid to 5-hydroxyisourate, which is further processed to form (S)-allantoin. The polypeptide is Uricase (Halalkalicoccus jeotgali (strain DSM 18796 / CECT 7217 / JCM 14584 / KCTC 4019 / B3)).